Here is a 193-residue protein sequence, read N- to C-terminus: NADH-quinone oxidoreductase subunit B (193 aa).

The [4Fe-4S] cluster site is built by cysteine 72, cysteine 73, cysteine 137, and cysteine 167.

This sequence belongs to the complex I 20 kDa subunit family. As to quaternary structure, NDH-1 is composed of 14 different subunits. Subunits NuoB, C, D, E, F, and G constitute the peripheral sector of the complex. [4Fe-4S] cluster is required as a cofactor.

The protein localises to the cell inner membrane. The catalysed reaction is a quinone + NADH + 5 H(+)(in) = a quinol + NAD(+) + 4 H(+)(out). In terms of biological role, NDH-1 shuttles electrons from NADH, via FMN and iron-sulfur (Fe-S) centers, to quinones in the respiratory chain. The immediate electron acceptor for the enzyme in this species is believed to be ubiquinone. Couples the redox reaction to proton translocation (for every two electrons transferred, four hydrogen ions are translocated across the cytoplasmic membrane), and thus conserves the redox energy in a proton gradient. The chain is NADH-quinone oxidoreductase subunit B from Bartonella quintana (strain Toulouse) (Rochalimaea quintana).